The sequence spans 1563 residues: Pentafunctional AROM polypeptide (1563 aa).

A 3-dehydroquinate synthase region spans residues 1–382 (MAESSSNPTR…YEPKASVVED (382 aa)). NAD(+) contacts are provided by residues 48–50 (DTN), 82–85 (EYSK), 113–115 (GGV), and D118. R129 serves as a coordination point for 7-phospho-2-dehydro-3-deoxy-D-arabino-heptonate. 138–139 (TT) lines the NAD(+) pocket. 7-phospho-2-dehydro-3-deoxy-D-arabino-heptonate is bound by residues D145 and K151. Residue K160 participates in NAD(+) binding. N161 provides a ligand contact to 7-phospho-2-dehydro-3-deoxy-D-arabino-heptonate. Residues 178–181 (FLNT) and N189 each bind NAD(+). E193 lines the Zn(2+) pocket. 7-phospho-2-dehydro-3-deoxy-D-arabino-heptonate contacts are provided by residues 193-196 (EVIK) and K248. E258 serves as the catalytic Proton acceptor; for 3-dehydroquinate synthase activity. 7-phospho-2-dehydro-3-deoxy-D-arabino-heptonate contacts are provided by residues 262 to 266 (RNLLN) and H269. H269 serves as a coordination point for Zn(2+). H273 (proton acceptor; for 3-dehydroquinate synthase activity) is an active-site residue. 7-phospho-2-dehydro-3-deoxy-D-arabino-heptonate-binding residues include H285 and K354. A Zn(2+)-binding site is contributed by H285. Positions 395 to 834 (VHAGVPKDLK…WDTMSNYFKS (440 aa)) are EPSP synthase. Catalysis depends on C816, which acts as the For EPSP synthase activity. Over residues 836–850 (LEGEEEPHSSHVSHE) the composition is skewed to basic and acidic residues. The segment at 836–857 (LEGEEEPHSSHVSHEKPRKGNP) is disordered. A shikimate kinase region spans residues 857–1051 (PKSIFIIGMR…KKKPQSSFVS (195 aa)). 864–871 (GMRGAGKS) lines the ATP pocket. Residues 1052-1265 (LTVPNVSKAL…AAPGQLSAAE (214 aa)) form a 3-dehydroquinase region. The active-site Proton acceptor; for 3-dehydroquinate dehydratase activity is the H1168. Catalysis depends on K1196, which acts as the Schiff-base intermediate with substrate; for 3-dehydroquinate dehydratase activity. The shikimate dehydrogenase stretch occupies residues 1278-1563 (PRSFYLFGKP…TDAQAAVMGN (286 aa)).

This sequence in the N-terminal section; belongs to the sugar phosphate cyclases superfamily. Dehydroquinate synthase family. In the 2nd section; belongs to the EPSP synthase family. It in the 3rd section; belongs to the shikimate kinase family. The protein in the 4th section; belongs to the type-I 3-dehydroquinase family. This sequence in the C-terminal section; belongs to the shikimate dehydrogenase family. In terms of assembly, homodimer. Requires Zn(2+) as cofactor.

The protein resides in the cytoplasm. It catalyses the reaction 7-phospho-2-dehydro-3-deoxy-D-arabino-heptonate = 3-dehydroquinate + phosphate. The catalysed reaction is 3-dehydroquinate = 3-dehydroshikimate + H2O. It carries out the reaction shikimate + NADP(+) = 3-dehydroshikimate + NADPH + H(+). The enzyme catalyses shikimate + ATP = 3-phosphoshikimate + ADP + H(+). It catalyses the reaction 3-phosphoshikimate + phosphoenolpyruvate = 5-O-(1-carboxyvinyl)-3-phosphoshikimate + phosphate. It functions in the pathway metabolic intermediate biosynthesis; chorismate biosynthesis; chorismate from D-erythrose 4-phosphate and phosphoenolpyruvate: step 2/7. The protein operates within metabolic intermediate biosynthesis; chorismate biosynthesis; chorismate from D-erythrose 4-phosphate and phosphoenolpyruvate: step 3/7. Its pathway is metabolic intermediate biosynthesis; chorismate biosynthesis; chorismate from D-erythrose 4-phosphate and phosphoenolpyruvate: step 4/7. It participates in metabolic intermediate biosynthesis; chorismate biosynthesis; chorismate from D-erythrose 4-phosphate and phosphoenolpyruvate: step 5/7. It functions in the pathway metabolic intermediate biosynthesis; chorismate biosynthesis; chorismate from D-erythrose 4-phosphate and phosphoenolpyruvate: step 6/7. In terms of biological role, the AROM polypeptide catalyzes 5 consecutive enzymatic reactions in prechorismate polyaromatic amino acid biosynthesis. The chain is Pentafunctional AROM polypeptide from Sordaria macrospora (strain ATCC MYA-333 / DSM 997 / K(L3346) / K-hell).